We begin with the raw amino-acid sequence, 116 residues long: Excisionase (116 aa).

In terms of biological role, part of the excision complex necessary for the excision of prophage from the host genome by site-specific recombination at the att site. The sequence is that of Excisionase (xis) from Salmonella phage P22 (Bacteriophage P22).